Reading from the N-terminus, the 597-residue chain is Aspartate--tRNA(Asp/Asn) ligase (597 aa).

Glu-182 provides a ligand contact to L-aspartate. Residues 206–209 form an aspartate region; the sequence is QLFK. Arg-228 lines the L-aspartate pocket. ATP-binding positions include 228-230 and Gln-237; that span reads RDE. An L-aspartate-binding site is contributed by His-456. Position 490 (Glu-490) interacts with ATP. An L-aspartate-binding site is contributed by Arg-497. 542–545 is an ATP binding site; the sequence is GFDR.

It belongs to the class-II aminoacyl-tRNA synthetase family. Type 1 subfamily. In terms of assembly, homodimer.

The protein localises to the cytoplasm. The catalysed reaction is tRNA(Asx) + L-aspartate + ATP = L-aspartyl-tRNA(Asx) + AMP + diphosphate. In terms of biological role, aspartyl-tRNA synthetase with relaxed tRNA specificity since it is able to aspartylate not only its cognate tRNA(Asp) but also tRNA(Asn). Reaction proceeds in two steps: L-aspartate is first activated by ATP to form Asp-AMP and then transferred to the acceptor end of tRNA(Asp/Asn). This chain is Aspartate--tRNA(Asp/Asn) ligase, found in Desulfatibacillum aliphaticivorans.